The following is a 459-amino-acid chain: Cysteine--tRNA ligase (459 aa).

Cys-28 contributes to the Zn(2+) binding site. Residues 30–40 carry the 'HIGH' region motif; that stretch reads VTVYDLCHIGH. 3 residues coordinate Zn(2+): Cys-209, His-234, and Glu-238. Positions 266 to 270 match the 'KMSKS' region motif; sequence KMSKS. Lys-269 serves as a coordination point for ATP.

Belongs to the class-I aminoacyl-tRNA synthetase family. In terms of assembly, monomer. Requires Zn(2+) as cofactor.

It is found in the cytoplasm. It carries out the reaction tRNA(Cys) + L-cysteine + ATP = L-cysteinyl-tRNA(Cys) + AMP + diphosphate. This is Cysteine--tRNA ligase from Haemophilus influenzae (strain 86-028NP).